Here is a 779-residue protein sequence, read N- to C-terminus: Probable glutamine--tRNA ligase (779 aa).

Residues 268-270 (EPN) and 274-280 (HIGHAKA) contribute to the ATP site. 2 residues coordinate L-glutamine: Asp-300 and Tyr-440. ATP is bound by residues Thr-459, 488–489 (RL), and 496–498 (LSK).

This sequence belongs to the class-I aminoacyl-tRNA synthetase family.

The enzyme catalyses tRNA(Gln) + L-glutamine + ATP = L-glutaminyl-tRNA(Gln) + AMP + diphosphate. The polypeptide is Probable glutamine--tRNA ligase (glnS) (Dictyostelium discoideum (Social amoeba)).